Here is a 353-residue protein sequence, read N- to C-terminus: C-X-C chemokine receptor type 4 (353 aa).

Residues 1 to 22 (MDGFRIFTSDNYTEDDLGSGDY) form an important for chemokine binding and signaling region. The Extracellular segment spans residues 1 to 39 (MDGFRIFTSDNYTEDDLGSGDYDSIKEPCFREENAHFNR). Asparagine 11 carries an N-linked (GlcNAc...) asparagine glycan. The residue at position 12 (tyrosine 12) is a Sulfotyrosine. A glycan (O-linked (Xyl...) (chondroitin sulfate) serine) is linked at serine 19. Tyrosine 22 is modified (sulfotyrosine). 2 disulfides stabilise this stretch: cysteine 29-cysteine 275 and cysteine 110-cysteine 187. The chain crosses the membrane as a helical span at residues 40–64 (IFLPTVYSIIFLTGIVGNGLVILVM). The Cytoplasmic segment spans residues 65-78 (GYQKKLRSMTDKYR). A helical membrane pass occupies residues 79–100 (LHLSVADLLFVLTLPFWAVDAV). Residues 95–98 (WAVD) form a chemokine binding region. Residues 101 to 111 (ANWYFGKFLCK) are Extracellular-facing. A helical membrane pass occupies residues 112–131 (AVHVIYTVNLYSSVLILAFI). The segment at 114 to 118 (HVIYT) is chemokine binding. Topologically, residues 132–155 (SLDRYLAIVHATNSQRPRKLLAEK) are cytoplasmic. The Important for signaling motif lies at 134–136 (DRY). Residues 136-148 (YLAIVHATNSQRP) form an involved in dimerization; when bound to chemokine region. The chain crosses the membrane as a helical span at residues 156–175 (VVYVGVWIPALLLTIPDFIF). At 176–196 (ANVREGDGRYICDRFYPNDLW) the chain is on the extracellular side. Residues 187 to 191 (CDRFY) are chemokine binding, important for signaling. The involved in dimerization stretch occupies residues 192-211 (PNDLWLVVFQFQHIMVGLIL). A helical membrane pass occupies residues 197–217 (LVVFQFQHIMVGLILPGIVIL). Topologically, residues 218-242 (SCYCIIISKLSHSKGYQKRKALKTT) are cytoplasmic. A helical transmembrane segment spans residues 243 to 262 (VILILAFFACWLPYYIGISI). The Extracellular segment spans residues 263–283 (DSFILLEIIQQGCEFESTVHK). The segment at 267–269 (LLE) is involved in dimerization. The chain crosses the membrane as a helical span at residues 284–303 (WISITEALAFFHCCLNPILY). Over 304–353 (AFLGAKFKTSAQHALTSVSRGSSLKILSKGKRGGHSSVSTESESSSFHSS) the chain is Cytoplasmic. 2 positions are modified to phosphoserine: serine 320 and serine 322. A phosphoserine; by PKC and GRK6 mark is found at serine 325 and serine 326. Positions 330–353 (LSKGKRGGHSSVSTESESSSFHSS) are disordered. A Phosphoserine; by GRK6 modification is found at serine 331. A Glycyl lysine isopeptide (Lys-Gly) (interchain with G-Cter in ubiquitin) cross-link involves residue lysine 332. Low complexity predominate over residues 338–353 (HSSVSTESESSSFHSS). Serine 340 is modified (phosphoserine; by GRK6). Phosphoserine occurs at positions 349 and 352.

The protein belongs to the G-protein coupled receptor 1 family. In terms of assembly, monomer. Can form homodimers. Interacts with CD164. Interacts with ARRB2; the interaction is dependent on the C-terminal phosphorylation of CXCR4 and allows activation of MAPK1 and MAPK3. Interacts with ARR3; the interaction is dependent on the C-terminal phosphorylation of CXCR4 and modulates calcium mobilization. Interacts with RNF113A; the interaction, enhanced by CXCL12, promotes CXCR4 ubiquitination and subsequent degradation. Interacts (via the cytoplasmic C-terminal) with ITCH (via the WW domains I and II); the interaction, enhanced by CXCL12, promotes CXCR4 ubiquitination and leads to its degradation. Interacts with extracellular ubiquitin. Interacts with DBN1; this interaction is enhanced by antigenic stimulation. Following LPS binding, may form a complex with GDF5, HSP90AA1 and HSPA8. Phosphorylated on agonist stimulation. Rapidly phosphorylated on serine and threonine residues in the C-terminal. Phosphorylation at Ser-325 and Ser-326 leads to recruitment of ITCH, ubiquitination and protein degradation. Post-translationally, ubiquitinated after ligand binding, leading to its degradation. Ubiquitinated by ITCH at the cell membrane on agonist stimulation. The ubiquitin-dependent mechanism, endosomal sorting complex required for transport (ESCRT), then targets CXCR4 for lysosomal degradation. This process is dependent also on prior Ser-/Thr-phosphorylation in the C-terminal of CXCR4. Also binding of ARRB1 to STAM negatively regulates CXCR4 sorting to lysosomes though modulating ubiquitination of SFR5S. In terms of processing, sulfation is required for efficient binding of CXCL12/SDF-1alpha and promotes its dimerization. O- and N-glycosylated. N-glycosylation can mask coreceptor function. The O-glycosylation chondroitin sulfate attachment does not affect interaction with CXCL12/SDF-1alpha nor its coreceptor activity.

It localises to the cell membrane. The protein localises to the cell junction. It is found in the early endosome. Its subcellular location is the late endosome. The protein resides in the lysosome. Receptor for the C-X-C chemokine CXCL12/SDF-1 that transduces a signal by increasing intracellular calcium ion levels and enhancing MAPK1/MAPK3 activation. Involved in the AKT signaling cascade. Plays a role in regulation of cell migration, e.g. during wound healing. Acts as a receptor for extracellular ubiquitin; leading to enhanced intracellular calcium ions and reduced cellular cAMP levels. Binds bacterial lipopolysaccharide (LPS) et mediates LPS-induced inflammatory response, including TNF secretion by monocytes. Involved in hematopoiesis and in cardiac ventricular septum formation. Also plays an essential role in vascularization of the gastrointestinal tract, probably by regulating vascular branching and/or remodeling processes in endothelial cells. Involved in cerebellar development. In the CNS, could mediate hippocampal-neuron survival. The chain is C-X-C chemokine receptor type 4 (CXCR4) from Sus scrofa (Pig).